Here is a 1311-residue protein sequence, read N- to C-terminus: Nephrocystin-3 (1311 aa).

Positions Ser81–Gln183 form a coiled coil. TPR repeat units follow at residues Leu889–Met923, Ala927–Ala960, Ala969–Ala1002, Ala1011–Ser1044, Ala1077–Val1110, Ala1119–Ala1152, Ala1161–Ser1194, Ala1203–Ser1236, and Gly1245–Glu1278.

Its subcellular location is the cell projection. It localises to the cilium. In terms of biological role, required for normal ciliary development and function. Inhibits disheveled-1-induced canonical Wnt-signaling activity and may also play a role in the control of non-canonical Wnt signaling that regulates planar cell polarity. Probably acts as a molecular switch between different Wnt signaling pathways. Required for proper convergent extension cell movements. The polypeptide is Nephrocystin-3 (nphp3) (Xenopus tropicalis (Western clawed frog)).